The primary structure comprises 203 residues: A-type ATP synthase subunit E (203 aa).

This sequence belongs to the V-ATPase E subunit family. In terms of assembly, has multiple subunits with at least A(3), B(3), C, D, E, F, H, I and proteolipid K(x).

The protein localises to the cell membrane. Component of the A-type ATP synthase that produces ATP from ADP in the presence of a proton gradient across the membrane. The chain is A-type ATP synthase subunit E from Thermococcus onnurineus (strain NA1).